The following is a 97-amino-acid chain: Large ribosomal subunit protein bL28 (97 aa).

The protein belongs to the bacterial ribosomal protein bL28 family.

The protein is Large ribosomal subunit protein bL28 of Rickettsia prowazekii (strain Madrid E).